Consider the following 395-residue polypeptide: Small RNA 2'-O-methyltransferase (395 aa).

S-adenosyl-L-methionine-binding residues include Asp79 and Ser115. 4 residues coordinate Mg(2+): Glu133, Glu136, His137, and His182.

The protein belongs to the methyltransferase superfamily. HEN1 family. It depends on Mg(2+) as a cofactor. As to expression, specifically expressed in testis.

The protein localises to the cytoplasm. The enzyme catalyses small RNA 3'-end nucleotide + S-adenosyl-L-methionine = small RNA 3'-end 2'-O-methylnucleotide + S-adenosyl-L-homocysteine + H(+). Methyltransferase that adds a 2'-O-methyl group at the 3'-end of piRNAs, a class of 24 to 30 nucleotide RNAs that are generated by a Dicer-independent mechanism and are primarily derived from transposons and other repeated sequence elements. This probably protects the 3'-end of piRNAs from uridylation activity and subsequent degradation. Stabilization of piRNAs is essential for gametogenesis. The protein is Small RNA 2'-O-methyltransferase (Henmt1) of Mus musculus (Mouse).